A 361-amino-acid polypeptide reads, in one-letter code: Phosphoserine aminotransferase (361 aa).

An L-glutamate-binding site is contributed by R42. Pyridoxal 5'-phosphate contacts are provided by residues 76-77 (AS), W102, T152, D172, and Q195. K196 is modified (N6-(pyridoxal phosphate)lysine). 237-238 (NT) provides a ligand contact to pyridoxal 5'-phosphate.

This sequence belongs to the class-V pyridoxal-phosphate-dependent aminotransferase family. SerC subfamily. As to quaternary structure, homodimer. The cofactor is pyridoxal 5'-phosphate.

Its subcellular location is the cytoplasm. It catalyses the reaction O-phospho-L-serine + 2-oxoglutarate = 3-phosphooxypyruvate + L-glutamate. The enzyme catalyses 4-(phosphooxy)-L-threonine + 2-oxoglutarate = (R)-3-hydroxy-2-oxo-4-phosphooxybutanoate + L-glutamate. It functions in the pathway amino-acid biosynthesis; L-serine biosynthesis; L-serine from 3-phospho-D-glycerate: step 2/3. In terms of biological role, catalyzes the reversible conversion of 3-phosphohydroxypyruvate to phosphoserine and of 3-hydroxy-2-oxo-4-phosphonooxybutanoate to phosphohydroxythreonine. This is Phosphoserine aminotransferase from Halalkalibacterium halodurans (strain ATCC BAA-125 / DSM 18197 / FERM 7344 / JCM 9153 / C-125) (Bacillus halodurans).